We begin with the raw amino-acid sequence, 65 residues long: Alpha-insect toxin BotIT1 (65 aa).

The LCN-type CS-alpha/beta domain maps to 2–64 (RDAYIAQNYN…VPIRIPGKCH (63 aa)). 4 disulfide bridges follow: cysteine 12/cysteine 63, cysteine 16/cysteine 36, cysteine 22/cysteine 46, and cysteine 26/cysteine 48.

This sequence belongs to the long (4 C-C) scorpion toxin superfamily. Sodium channel inhibitor family. Alpha subfamily. Expressed by the venom gland.

It localises to the secreted. Functionally, alpha toxins bind voltage-independently at site-3 of sodium channels (Nav) and inhibit the inactivation of the activated channels, thereby blocking neuronal transmission. This contractive toxin is highly toxic to insects and barely toxic to mammals. The polypeptide is Alpha-insect toxin BotIT1 (Buthus occitanus tunetanus (Common European scorpion)).